The primary structure comprises 345 residues: Uroporphyrinogen decarboxylase (345 aa).

Substrate-binding positions include 27-31, F46, D76, Y152, S207, and H321; that span reads RQAGR.

This sequence belongs to the uroporphyrinogen decarboxylase family. As to quaternary structure, homodimer.

The protein localises to the cytoplasm. It catalyses the reaction uroporphyrinogen III + 4 H(+) = coproporphyrinogen III + 4 CO2. It participates in porphyrin-containing compound metabolism; protoporphyrin-IX biosynthesis; coproporphyrinogen-III from 5-aminolevulinate: step 4/4. Catalyzes the decarboxylation of four acetate groups of uroporphyrinogen-III to yield coproporphyrinogen-III. The sequence is that of Uroporphyrinogen decarboxylase from Staphylococcus aureus (strain MRSA252).